Consider the following 103-residue polypeptide: Truncated secreted TNF-receptor-like protein A53R (103 aa).

A TNFR-Cys 1 repeat occupies 36–73 (SCDKGEYLDKRHNQCCNRCPPGEFAKVRCNGNDNTKCE). Disulfide bonds link Cys-37–Cys-50, Cys-51–Cys-64, and Cys-54–Cys-72. A TNFR-Cys 2; truncated repeat occupies 74-103 (RCPPHTYTTIPIILMDVINVENAQPDHLIR).

It belongs to the poxviridae A53R protein family.

The protein is Truncated secreted TNF-receptor-like protein A53R of Vaccinia virus (strain Western Reserve) (VACV).